The sequence spans 655 residues: MGIFSIANQHIRFAVKLATAIVLALFVGFHFQLETPRWAVLTAAIVAAGPAFAAGGEPYSGAIRYRGFLRIIGTFIGCIAGLVIIIAMIRAPLLMILVCCIWAGFCTWISSLVRIENSYAWGLAGYTALIIVITIQPEPLLTPQFAVERCSEIVIGIVCAIMADLLFSPRSIKQEVDRELESLLVAQYQLMQLCIKHGDGEVVDKAWGDLVRRTTALQGMRSNLNMESSRWARANRRLKAINTLSLTLITQSCETYLIQNTRPELITDTFREFFDTPVETAQDVHKQLKRLRRVIAWTGERETPVTIYSWVAAATRYQLLKRGVISNTKINATEEEILQGEPEVKVESAERHHAMVNFWRTTLSCILGTLFWLWTGWTSGSGAMVMIAVVTSLAMRLPNPRMVAIDFIYGTLAALPLGLLYFLVIIPNTQQSMLLLCISLAVLGFFLGIEVQKRRLGSMGALASTINIIVLDNPMTFHFSQFLDSALGQIVGCVLAFTVILLVRDKSRDRTGRVLLNQFVFAAVSAMTTNVARRKENHLPALYQQLFLLMNKFPGDLPKFRLALTMIIAHQRLRDAPIPVNEDLSAFHRQMRRTADHVISARSDDKRRRYFGQLLEELEIYQEKLRIWQAPPQVTEPVHRLAGMLHKYQHALTDS.

11 helical membrane-spanning segments follow: residues 13-33, 38-58, 69-89, 93-113, 121-141, 152-172, 370-390, 407-427, 431-451, 459-479, and 482-502; these read FAVK…HFQL, WAVL…GGEP, LRII…IAMI, LLMI…SSLV, WGLA…EPLL, EIVI…PRSI, LFWL…IAVV, FIYG…VIIP, QSML…GIEV, MGAL…TFHF, and FLDS…VILL.

This sequence belongs to the aromatic acid exporter ArAE (TC 2.A.85) family.

The protein localises to the cell inner membrane. In terms of biological role, forms an efflux pump with AaeA. Could function as a metabolic relief valve, allowing to eliminate certain compounds when they accumulate to high levels in the cell. In Shigella sonnei (strain Ss046), this protein is p-hydroxybenzoic acid efflux pump subunit AaeB.